A 109-amino-acid chain; its full sequence is MGSPSLTKTINASLSLHSITQPITLLKTMHYVLQLTILPSAMQHYATLRNFTHPACSVNKQAEQGKEQQQYAMKSQFQFRSGICSKVRSDELGFKGNSLQLNDLPKNPY.

The protein resides in the mitochondrion. Its function is as follows. Has a role in meiosis. The polypeptide is Meiotically up-regulated gene 153 protein (mug153) (Schizosaccharomyces pombe (strain 972 / ATCC 24843) (Fission yeast)).